The chain runs to 120 residues: Large ribosomal subunit protein bL19 (120 aa).

Belongs to the bacterial ribosomal protein bL19 family.

This protein is located at the 30S-50S ribosomal subunit interface and may play a role in the structure and function of the aminoacyl-tRNA binding site. The protein is Large ribosomal subunit protein bL19 of Thermosynechococcus vestitus (strain NIES-2133 / IAM M-273 / BP-1).